Here is a 954-residue protein sequence, read N- to C-terminus: Lysine-specific demethylase JMJ14 (954 aa).

The segment at Met-1–Ser-46 is disordered. Positions Glu-29–Lys-38 are enriched in polar residues. One can recognise a JmjN domain in the interval Ala-56–Pro-97. Positions Arg-136 to Lys-143 match the Nuclear localization signal 1 motif. The disordered stretch occupies residues Arg-148–Gly-170. Residues Gln-263–Ser-429 form the JmjC domain. Fe cation-binding residues include His-309, Glu-311, and His-397. Residues Trp-470–Asp-477 carry the Nuclear localization signal 2 motif. Zn(2+)-binding residues include Cys-519, Cys-522, Cys-533, Cys-535, Cys-542, His-545, Cys-550, and Cys-552. A C5HC2 zinc finger spans residues Cys-519–Leu-571. A disordered region spans residues Ser-641–Ile-670. The span at Val-645–Ile-670 shows a compositional bias: basic and acidic residues. Residues Ala-726–Ala-784 enclose the FYR N-terminal domain. In terms of domain architecture, FYR C-terminal spans Leu-786–Lys-876. A disordered region spans residues Glu-884–Asp-905. Basic and acidic residues predominate over residues Pro-885–Asp-905.

It belongs to the JARID1 histone demethylase family. Interacts with NAC050 and NAC051/NAC052. Interacts with THAL in the nucleus. Fe(2+) is required as a cofactor. Expressed in shoot apex, primary root tip, trichomes of young leaves, leaf vascular tissues, anther filaments and styles. Detected in inflorescences, leaves, stems, roots and siliques. Mostly expressed in floral organs, and, at low levels, in other organs.

Its subcellular location is the nucleus. It localises to the nucleoplasm. It catalyses the reaction N(6),N(6),N(6)-trimethyl-L-lysyl(4)-[histone H3] + 2-oxoglutarate + O2 = N(6),N(6)-dimethyl-L-lysyl(4)-[histone H3] + formaldehyde + succinate + CO2. The catalysed reaction is N(6),N(6)-dimethyl-L-lysyl(4)-[histone H3] + 2-oxoglutarate + O2 = N(6)-methyl-L-lysyl(4)-[histone H3] + formaldehyde + succinate + CO2. It carries out the reaction N(6)-methyl-L-lysyl(4)-[histone H3] + 2-oxoglutarate + O2 = L-lysyl(4)-[histone H3] + formaldehyde + succinate + CO2. The enzyme catalyses N(6),N(6),N(6)-trimethyl-L-lysyl(4)-[histone H3] + 3 2-oxoglutarate + 3 O2 = L-lysyl(4)-[histone H3] + 3 formaldehyde + 3 succinate + 3 CO2. In terms of biological role, transcriptional repressor. Histone demethylase that demethylates 'Lys-4' (H3K4me) of histone H3 with a higher activity for H3K4me3 and H3K4me2 than H3K4me1. No activity on H3K9me3/2, H3K36me3/2 and H3K27me3/2. Function as a nocturne 'eraser' to counteract the diurnal 'writer' methylase activity of ATXR3/SDG2 thus orchestrating the circadian rhythm of histone modifications (e.g. H3K4me3) and modulating the rhythmic expression of diurnal target genes; this mechanism also relies on the circadian clock oscillators CCA1 and LHY. Involved in a negative regulation of root meristem growth upon suboptimal root growth conditions. Represses FT and TSF expression to inhibit the floral transition. Binds around the transcription start site of the FT locus. Involved in the DRM2-mediated maintenance of DNA methylation, but not required for the de novo DNA methylation. Required for demethylating histone H3K4me3 at the target of RNA silencing. Counteracts the DNA methylation of expressed transgenes; specific attenuation of transgene DNA methylation enhances the production of aberrant RNAs (e.g. uncapped and antisense) that readily induce systemic RDR6-dependent post-transcriptional transgene silencing (PTGS) spreading. Together with NAC051/NAC052 and NAC050, regulates gene expression and flowering time, probably by the promotion of RNA-mediated gene silencing. Together with JMJ16 and JMJ17, required for plant growth and development. Promotes local and systemic immunity (especially toward the bacterial pathogen Pseudomonas syringae Pst DC3000 avrRpt2) by regulating positively pathogen-induced H3K4me3 enrichment and expression of defense genes involved in salicylic acid (SA)- and pipecolic acid (Pip)-mediated defense pathways (e.g. PR1, FMO1, ALD1 and SARD4). This chain is Lysine-specific demethylase JMJ14, found in Arabidopsis thaliana (Mouse-ear cress).